The chain runs to 92 residues: UPF0223 protein SPCG_1392 (92 aa).

Belongs to the UPF0223 family.

In Streptococcus pneumoniae (strain CGSP14), this protein is UPF0223 protein SPCG_1392.